Reading from the N-terminus, the 245-residue chain is LOB domain-containing protein 16 (245 aa).

The 103-residue stretch at 14 to 116 (SPCGACKFLR…SQVMQMKAQI (103 aa)) folds into the LOB domain. The disordered stretch occupies residues 162–183 (YYGHVNPNNPVSPQSSLEESFS).

This sequence belongs to the LOB domain-containing protein family. As to quaternary structure, homodimer and heterodimer with LBD18. Expressed in roots and faintly in shoots.

It localises to the nucleus. Transcriptional activator. Involved in lateral root formation. Regulated by the transcriptional activators ARF7 and ARF19. Functions in the initiation and emergence of lateral roots, in conjunction with LBD18, downstream of ARF7 and ARF19. Acts downstream of the auxin influx carriers AUX1 and LAX1 in the regulation of lateral root initiation and development. In Arabidopsis thaliana (Mouse-ear cress), this protein is LOB domain-containing protein 16 (LBD16).